A 401-amino-acid chain; its full sequence is Thermophilic serine proteinase (401 aa).

An N-terminal signal peptide occupies residues 1–24; sequence MKFKAIVSLSLAVSMSLFPFLVEA. The propeptide occupies 25-121; it reads ASNDGVESPK…AEPNYLFNAA (97 aa). Position 126 (Asp126) interacts with Ca(2+). Residues 133-399 form the Peptidase S8 domain; it reads QYGPQNTYTD…YGRINSYNAV (267 aa). The active-site Charge relay system is Asp160. Residues Pro168, Asp169, Asp171, Asp179, Asp184, and Asp186 each contribute to the Ca(2+) site. His193 serves as the catalytic Charge relay system. Glu204, Asn207, Thr209, and Ile211 together coordinate Ca(2+). Cys258 and Cys260 form a disulfide bridge. Na(+) contacts are provided by Tyr297, Val300, and Asp323. The active-site Charge relay system is the Ser347.

The protein belongs to the peptidase S8 family. It depends on Ca(2+) as a cofactor. Na(+) is required as a cofactor.

The protein localises to the secreted. This chain is Thermophilic serine proteinase, found in Bacillus sp. (strain AK1).